Reading from the N-terminus, the 335-residue chain is Anthranilate phosphoribosyltransferase (335 aa).

5-phospho-alpha-D-ribose 1-diphosphate-binding positions include G79, 82–83, S87, 89–92, 107–115, and S119; these read GD, NIST, and KHGNRSITS. G79 lines the anthranilate pocket. S91 provides a ligand contact to Mg(2+). N110 lines the anthranilate pocket. R165 provides a ligand contact to anthranilate. D224 and E225 together coordinate Mg(2+).

Belongs to the anthranilate phosphoribosyltransferase family. Homodimer. Requires Mg(2+) as cofactor.

The catalysed reaction is N-(5-phospho-beta-D-ribosyl)anthranilate + diphosphate = 5-phospho-alpha-D-ribose 1-diphosphate + anthranilate. The protein operates within amino-acid biosynthesis; L-tryptophan biosynthesis; L-tryptophan from chorismate: step 2/5. Its function is as follows. Catalyzes the transfer of the phosphoribosyl group of 5-phosphorylribose-1-pyrophosphate (PRPP) to anthranilate to yield N-(5'-phosphoribosyl)-anthranilate (PRA). The chain is Anthranilate phosphoribosyltransferase from Lactococcus lactis subsp. cremoris (strain SK11).